The chain runs to 143 residues: Large ribosomal subunit protein uL16 (143 aa).

Over residues 1–17 (MLQPKRTKFRKAHKGRI) the composition is skewed to basic residues. The disordered stretch occupies residues 1 to 20 (MLQPKRTKFRKAHKGRIHGN).

It belongs to the universal ribosomal protein uL16 family. In terms of assembly, part of the 50S ribosomal subunit.

In terms of biological role, binds 23S rRNA and is also seen to make contacts with the A and possibly P site tRNAs. The polypeptide is Large ribosomal subunit protein uL16 (Zymomonas mobilis subsp. mobilis (strain ATCC 31821 / ZM4 / CP4)).